A 263-amino-acid polypeptide reads, in one-letter code: uncharacterized protein (263 aa).

This is an uncharacterized protein from Mycobacterium tuberculosis (strain CDC 1551 / Oshkosh).